A 432-amino-acid polypeptide reads, in one-letter code: Cytochrome c biogenesis protein CcsB (432 aa).

A run of 3 helical transmembrane segments spans residues 14 to 34 (LRIAIGLLFVIALSSALGTAI), 72 to 92 (SSWFLALLAWLGLALILCSWR), and 162 to 182 (VGPMLVHLGLVLLMLGAVWGS).

It belongs to the Ccs1/CcsB family. May interact with CcsA.

The protein resides in the cellular thylakoid membrane. Required during biogenesis of c-type cytochromes (cytochrome c6 and cytochrome f) at the step of heme attachment. The sequence is that of Cytochrome c biogenesis protein CcsB from Prochlorococcus marinus (strain MIT 9303).